Here is a 282-residue protein sequence, read N- to C-terminus: NADPH-dependent 7-cyano-7-deazaguanine reductase (282 aa).

88–90 (IES) is a binding site for substrate. 90–91 (SK) serves as a coordination point for NADPH. The active-site Thioimide intermediate is Cys-190. Asp-197 (proton donor) is an active-site residue. 229–230 (HE) contacts substrate. 258 to 259 (RG) contributes to the NADPH binding site.

Belongs to the GTP cyclohydrolase I family. QueF type 2 subfamily. Homodimer.

The protein resides in the cytoplasm. The catalysed reaction is 7-aminomethyl-7-carbaguanine + 2 NADP(+) = 7-cyano-7-deazaguanine + 2 NADPH + 3 H(+). It participates in tRNA modification; tRNA-queuosine biosynthesis. In terms of biological role, catalyzes the NADPH-dependent reduction of 7-cyano-7-deazaguanine (preQ0) to 7-aminomethyl-7-deazaguanine (preQ1). In Shigella flexneri serotype 5b (strain 8401), this protein is NADPH-dependent 7-cyano-7-deazaguanine reductase.